The primary structure comprises 454 residues: Adenosylmethionine-8-amino-7-oxononanoate aminotransferase (454 aa).

119–120 (GA) is a pyridoxal 5'-phosphate binding site. Tyr-152 is a substrate binding site. Asp-257 contributes to the pyridoxal 5'-phosphate binding site. Substrate is bound by residues Lys-286, Gly-321, and Arg-416. Lys-286 carries the post-translational modification N6-(pyridoxal phosphate)lysine.

The protein belongs to the class-III pyridoxal-phosphate-dependent aminotransferase family. BioA subfamily. In terms of assembly, homodimer. Pyridoxal 5'-phosphate serves as cofactor.

Its subcellular location is the cytoplasm. The catalysed reaction is (8S)-8-amino-7-oxononanoate + S-adenosyl-L-methionine = S-adenosyl-4-methylsulfanyl-2-oxobutanoate + (7R,8S)-7,8-diammoniononanoate. It functions in the pathway cofactor biosynthesis; biotin biosynthesis; 7,8-diaminononanoate from 8-amino-7-oxononanoate (SAM route): step 1/1. Catalyzes the transfer of the alpha-amino group from S-adenosyl-L-methionine (SAM) to 7-keto-8-aminopelargonic acid (KAPA) to form 7,8-diaminopelargonic acid (DAPA). It is the only aminotransferase known to utilize SAM as an amino donor. The protein is Adenosylmethionine-8-amino-7-oxononanoate aminotransferase of Anoxybacillus flavithermus (strain DSM 21510 / WK1).